A 234-amino-acid polypeptide reads, in one-letter code: Uridylate kinase (234 aa).

ATP-binding positions include 8 to 11 (KLSG), glycine 51, and arginine 55. Residues aspartate 68 and 129 to 136 (TSNPFFTT) contribute to the UMP site. Threonine 156, tyrosine 162, and aspartate 165 together coordinate ATP.

This sequence belongs to the UMP kinase family. As to quaternary structure, homohexamer.

It is found in the cytoplasm. It carries out the reaction UMP + ATP = UDP + ADP. It participates in pyrimidine metabolism; CTP biosynthesis via de novo pathway; UDP from UMP (UMPK route): step 1/1. Inhibited by UTP. Catalyzes the reversible phosphorylation of UMP to UDP. In Fervidobacterium nodosum (strain ATCC 35602 / DSM 5306 / Rt17-B1), this protein is Uridylate kinase.